Here is a 436-residue protein sequence, read N- to C-terminus: Histidine--tRNA ligase (436 aa).

It belongs to the class-II aminoacyl-tRNA synthetase family.

It is found in the cytoplasm. The catalysed reaction is tRNA(His) + L-histidine + ATP = L-histidyl-tRNA(His) + AMP + diphosphate + H(+). The sequence is that of Histidine--tRNA ligase from Thermococcus kodakarensis (strain ATCC BAA-918 / JCM 12380 / KOD1) (Pyrococcus kodakaraensis (strain KOD1)).